A 779-amino-acid polypeptide reads, in one-letter code: Cell division control protein 4 (779 aa).

The interval alanine 39–aspartate 80 is disordered. The Nuclear localization signal motif lies at lysine 82–lysine 85. Residue serine 104 is modified to Phosphoserine. The region spanning arginine 272–leucine 319 is the F-box domain. 7 WD repeats span residues histidine 380–aspartate 408, glycine 420–aspartate 449, glycine 461–lysine 493, glycine 528–aspartate 556, glycine 568–aspartate 598, glycine 630–aspartate 658, and histidine 669–asparagine 698.

As to quaternary structure, interacts with DCD53 and SKP1. Component of the SCF(CDC4) complex containing CDC53, SKP1, RBX1 and CDC4. CDC34. Interacts with CDC6 and CIC1. Interacts with SIC1; the interaction involves a SIC1 double phosphorylated motif (degron). Homodimerizes; the dimerization increases SIC1 ubiquitination in vitro.

Its subcellular location is the nucleus. It functions in the pathway protein modification; protein ubiquitination. Substrate recognition component of a SCF (SKP1-CUL1-F-box protein) E3 ubiquitin-protein ligase complex which mediates the ubiquitination and subsequent proteasomal degradation of target proteins. Recognizes and binds to phosphorylated target proteins. Directs ubiquitination of the phosphorylated CDK inhibitor SIC1. Involved in the degradation of CDC6 together with CDC34/UBC3 and CDC53, and in restricting the degradation of FAR1 to the nucleus. Is essential for initiation of DNA replication and separation of the spindle pole bodies to form the poles of the mitotic spindle. It also plays a role in bud development, fusion of zygotic nuclei after conjugation and various aspects of sporulation. Required for HTA1-HTB1 locus transcription activation. Required for G1/S and G2/M transition. This Saccharomyces cerevisiae (strain ATCC 204508 / S288c) (Baker's yeast) protein is Cell division control protein 4 (CDC4).